Reading from the N-terminus, the 689-residue chain is Glycine--tRNA ligase beta subunit (689 aa).

This sequence belongs to the class-II aminoacyl-tRNA synthetase family. Tetramer of two alpha and two beta subunits.

It is found in the cytoplasm. The enzyme catalyses tRNA(Gly) + glycine + ATP = glycyl-tRNA(Gly) + AMP + diphosphate. This Escherichia coli O17:K52:H18 (strain UMN026 / ExPEC) protein is Glycine--tRNA ligase beta subunit.